A 314-amino-acid chain; its full sequence is MMKVVFMGTPDFSVPVLRRLIEDGYDVVGVVTQPDRPVGRKKVLTPTPVKVEAEKHGIPVVQPLKIREKDEYEKVLALEPDLIVTAAFGQIVPNEILEAPKYGCINVHASLLPELRGGAPIHYAIMEGKEKTGITIMYMVEKLDAGDILTQVEVEIEERETTGSLFDKLSEAGAHLLSKTVPLLIQGKLEPIKQSEAEVTFAYNIKREQEIIDWTKTGEEVYNHIRGLNPWPVAYTTLAGQVIKVWWGEKVSITEKAEPGTIVALEEDGFVVATGNETGVKITELQPSGKKRMSCSQFLRGTKPEIGTKLGENA.

110–113 (SLLP) provides a ligand contact to (6S)-5,6,7,8-tetrahydrofolate.

Belongs to the Fmt family.

It carries out the reaction L-methionyl-tRNA(fMet) + (6R)-10-formyltetrahydrofolate = N-formyl-L-methionyl-tRNA(fMet) + (6S)-5,6,7,8-tetrahydrofolate + H(+). Attaches a formyl group to the free amino group of methionyl-tRNA(fMet). The formyl group appears to play a dual role in the initiator identity of N-formylmethionyl-tRNA by promoting its recognition by IF2 and preventing the misappropriation of this tRNA by the elongation apparatus. The sequence is that of Methionyl-tRNA formyltransferase from Bacillus mycoides (strain KBAB4) (Bacillus weihenstephanensis).